A 120-amino-acid polypeptide reads, in one-letter code: NAD(P)H-quinone oxidoreductase subunit 3 (120 aa).

The next 3 membrane-spanning stretches (helical) occupy residues 10 to 30 (FLGFLLIAAAVPILALVTNLI), 64 to 84 (MFALVFVIFDVETVFLYPWAV), and 89 to 109 (LGLLAFIEALIFIAILVIALA).

The protein belongs to the complex I subunit 3 family. In terms of assembly, NDH-1 can be composed of about 15 different subunits; different subcomplexes with different compositions have been identified which probably have different functions.

The protein localises to the cellular thylakoid membrane. It carries out the reaction a plastoquinone + NADH + (n+1) H(+)(in) = a plastoquinol + NAD(+) + n H(+)(out). It catalyses the reaction a plastoquinone + NADPH + (n+1) H(+)(in) = a plastoquinol + NADP(+) + n H(+)(out). NDH-1 shuttles electrons from an unknown electron donor, via FMN and iron-sulfur (Fe-S) centers, to quinones in the respiratory and/or the photosynthetic chain. The immediate electron acceptor for the enzyme in this species is believed to be plastoquinone. Couples the redox reaction to proton translocation, and thus conserves the redox energy in a proton gradient. Cyanobacterial NDH-1 also plays a role in inorganic carbon-concentration. This chain is NAD(P)H-quinone oxidoreductase subunit 3, found in Prochlorococcus marinus (strain MIT 9312).